The chain runs to 960 residues: Putative helicase L207/L206 (960 aa).

The tract at residues 1–32 (MTSKTENKKSVSSKTGRTTNNSTNKKTTEKSV) is disordered. The segment covering 12–25 (SSKTGRTTNNSTNK) has biased composition (low complexity). Positions 646-807 (SMREYILTLL…FIKHSEATKK (162 aa)) constitute an SF3 helicase domain.

This chain is Putative helicase L207/L206, found in Acanthamoeba polyphaga mimivirus (APMV).